The primary structure comprises 183 residues: Protein CT_584 (183 aa).

It belongs to the chlamydial CPn_0803/CT_584/TC_0873 family.

In Chlamydia trachomatis serovar D (strain ATCC VR-885 / DSM 19411 / UW-3/Cx), this protein is Protein CT_584.